A 71-amino-acid polypeptide reads, in one-letter code: Conotoxin Lt11.3 (71 aa).

Positions 1-26 (MMFRLTSVGCILLVIAFLNLVGLTNA) are cleaved as a signal peptide. Disulfide bonds link cysteine 27–cysteine 41, cysteine 34–cysteine 46, cysteine 40–cysteine 50, and cysteine 45–cysteine 54. Proline 57 bears the Proline amide mark. Residues 61–71 (TRLQGFFKHRR) constitute a propeptide that is removed on maturation.

The protein belongs to the conotoxin I2 superfamily. As to expression, expressed by the venom duct.

The protein localises to the secreted. Probable neurotoxin. The polypeptide is Conotoxin Lt11.3 (Conus litteratus (Lettered cone)).